Consider the following 321-residue polypeptide: tRNA(Ile)-lysidine synthase (321 aa).

21–26 (SYGSDS) provides a ligand contact to ATP.

The protein belongs to the tRNA(Ile)-lysidine synthase family.

It is found in the cytoplasm. The enzyme catalyses cytidine(34) in tRNA(Ile2) + L-lysine + ATP = lysidine(34) in tRNA(Ile2) + AMP + diphosphate + H(+). In terms of biological role, ligates lysine onto the cytidine present at position 34 of the AUA codon-specific tRNA(Ile) that contains the anticodon CAU, in an ATP-dependent manner. Cytidine is converted to lysidine, thus changing the amino acid specificity of the tRNA from methionine to isoleucine. In Campylobacter jejuni (strain RM1221), this protein is tRNA(Ile)-lysidine synthase.